The chain runs to 134 residues: Small ribosomal subunit protein uS8c (134 aa).

Belongs to the universal ribosomal protein uS8 family. Part of the 30S ribosomal subunit.

The protein resides in the plastid. It is found in the chloroplast. In terms of biological role, one of the primary rRNA binding proteins, it binds directly to 16S rRNA central domain where it helps coordinate assembly of the platform of the 30S subunit. The polypeptide is Small ribosomal subunit protein uS8c (rps8) (Populus alba (White poplar)).